The primary structure comprises 387 residues: Succinate--CoA ligase [ADP-forming] subunit beta (387 aa).

An ATP-grasp domain is found at 9 to 236; sequence KELFAKHNVP…RAATDPLELK (228 aa). Residues lysine 45, 52 to 54, serine 94, and glutamate 99 contribute to the ATP site; that span reads GRG. Mg(2+) contacts are provided by asparagine 191 and aspartate 205. Residues asparagine 256 and 318-320 each bind substrate; that span reads GIT.

It belongs to the succinate/malate CoA ligase beta subunit family. As to quaternary structure, heterotetramer of two alpha and two beta subunits. The cofactor is Mg(2+).

It catalyses the reaction succinate + ATP + CoA = succinyl-CoA + ADP + phosphate. It carries out the reaction GTP + succinate + CoA = succinyl-CoA + GDP + phosphate. Its pathway is carbohydrate metabolism; tricarboxylic acid cycle; succinate from succinyl-CoA (ligase route): step 1/1. Its function is as follows. Succinyl-CoA synthetase functions in the citric acid cycle (TCA), coupling the hydrolysis of succinyl-CoA to the synthesis of either ATP or GTP and thus represents the only step of substrate-level phosphorylation in the TCA. The beta subunit provides nucleotide specificity of the enzyme and binds the substrate succinate, while the binding sites for coenzyme A and phosphate are found in the alpha subunit. In Mycobacterium tuberculosis (strain CDC 1551 / Oshkosh), this protein is Succinate--CoA ligase [ADP-forming] subunit beta.